A 558-amino-acid chain; its full sequence is Scarecrow-like protein 6 (558 aa).

The interval 19–90 (FSSSFPQPPS…GGDATTDEQC (72 aa)) is disordered. Positions 54-75 (SVLDSLISPTSSSTVSSSHGGN) are enriched in low complexity. Residues 196–554 (KRLNPGPVGI…TELVGVSAWR (359 aa)) enclose the GRAS domain. Positions 203 to 257 (VGITEQLVKAAEVIESDTCLAQGILARLNQQLSSPVGKPLERAAFYFKEALNNLL) are leucine repeat I (LRI). Residues 276–340 (YKSFSEISPV…DNAAPLSLKI (65 aa)) are VHIID. The VHIID signature appears at 307-311 (LHIID). Positions 356–388 (FTQDNLKHFASEINISLDIQVLSLDLLGSISWP) are leucine repeat II (LRII). A PFYRE region spans residues 396–479 (VAVNISAASF…RFLIQPEIEK (84 aa)). Positions 482–554 (LDRSRPIERP…TELVGVSAWR (73 aa)) are SAW.

This sequence belongs to the GRAS family. As to quaternary structure, interacts with Meloidogyne incognita 16D10. In terms of tissue distribution, expressed in seedlings, roots, leaves, flowers and siliques.

It is found in the nucleus. In terms of biological role, probable transcription factor involved in plant development. The polypeptide is Scarecrow-like protein 6 (SCL6) (Arabidopsis thaliana (Mouse-ear cress)).